We begin with the raw amino-acid sequence, 960 residues long: Cyclin-dependent kinase-like 5 (960 aa).

The Protein kinase domain occupies 13 to 297 (FEILGVVGEG…TEQCLNHPTF (285 aa)). ATP is bound by residues 19–27 (VGEGAYGVV) and lysine 42. Aspartate 135 acts as the Proton acceptor in catalysis. Disordered regions lie at residues 300–349 (QRLL…IQNL), 382–566 (KTYQ…RHSK), 646–834 (SPQP…TQSQ), and 848–960 (ASNH…ETAL). Polar residues-rich tracts occupy residues 319–336 (ESSTLSNRNQAGKSTALQ) and 382–402 (KTYQASSQPGSTSKDLTNNNI). Serine 407 is modified (phosphoserine). Positions 407 to 417 (SPKEAKSKTEF) are enriched in basic and acidic residues. Polar residues-rich tracts occupy residues 434–462 (LKSNSRSQQNRHSFMESSQSKAGTLQPNE), 473–482 (IPQSSRSPSY), and 510–548 (EPSTSRYFPSSCLDLNSPTSPTPTRHSDTRTLLSPSGRN). Serine 479 carries the post-translational modification Phosphoserine. 2 stretches are compositionally biased toward basic and acidic residues: residues 549–559 (NRNEGTLDSRR) and 679–704 (QKSEGGVYHDPHSDDGTAPKENRHLY). Serine 720 carries the post-translational modification Phosphoserine. Over residues 728–748 (HENNVSTRVSSLPSESSSGTN) the composition is skewed to polar residues. Serine 761 carries the post-translational modification Phosphoserine. Over residues 769-778 (EQLKEKEKQG) the composition is skewed to basic and acidic residues. The segment covering 791–816 (QTVPNSDSPDLLTLQKSIHSASTPSS) has biased composition (polar residues). The span at 817 to 827 (RPKEWRPEKIS) shows a compositional bias: basic and acidic residues. Composition is skewed to polar residues over residues 862 to 872 (LTAQQTKNSFS), 880 to 890 (SQASGGSSNIR), and 914 to 928 (SSVTRSATEGPSYSE).

The protein belongs to the protein kinase superfamily. CMGC Ser/Thr protein kinase family. CDC2/CDKX subfamily. As to quaternary structure, interacts with MECP2. Autophosphorylated. Expressed in brain, lung, kidney, prostate, ovary, placenta, pancreas and testis. In terms of tissue distribution, predominant transcript in brain.

The protein resides in the nucleus. Its subcellular location is the cytoplasm. It localises to the cytoskeleton. The protein localises to the cilium basal body. It is found in the microtubule organizing center. The protein resides in the centrosome. It catalyses the reaction L-seryl-[protein] + ATP = O-phospho-L-seryl-[protein] + ADP + H(+). The catalysed reaction is L-threonyl-[protein] + ATP = O-phospho-L-threonyl-[protein] + ADP + H(+). In terms of biological role, mediates phosphorylation of MECP2. May regulate ciliogenesis. The polypeptide is Cyclin-dependent kinase-like 5 (Homo sapiens (Human)).